The sequence spans 151 residues: Small ribosomal subunit protein uS15 (151 aa).

The tract at residues 1–20 (MARLHSGKRGSSGSTRPLRT) is disordered.

This sequence belongs to the universal ribosomal protein uS15 family. In terms of assembly, part of the 30S ribosomal subunit.

This is Small ribosomal subunit protein uS15 from Methanococcus aeolicus (strain ATCC BAA-1280 / DSM 17508 / OCM 812 / Nankai-3).